The primary structure comprises 69 residues: U2-agatoxin-Ao1c (69 aa).

The signal sequence occupies residues 1-20 (MKAIISLLLISAMVFSMIEA). A propeptide spanning residues 21 to 34 (VPVEEGLQLFEGER) is cleaved from the precursor. 3 disulfide bridges follow: Cys-36-Cys-52, Cys-43-Cys-57, and Cys-51-Cys-67. Leu-68 carries the leucine amide modification.

Belongs to the neurotoxin 01 (U2-agtx) family. In terms of tissue distribution, expressed by the venom gland.

The protein resides in the secreted. In terms of biological role, insect active toxin causing rapid but reversible paralysis in crickets. No activity shown in mammals. Does not show effect on mammalian voltage-gated calcium channels. This chain is U2-agatoxin-Ao1c, found in Agelena orientalis (Funnel-web spider).